The sequence spans 312 residues: MTSCVAEEPIKKIAIFGGTHGNELTGVFLVTHWLKNGAEVHRAGLEVKPFITNPRAVEKCTRYIDCDLNRVFDLENLSKEMSEDLPYEVRRAQEINHLFGPKNSDDAYDVVFDLHNTTSNMGCTLILEDSRNDFLIQMFHYIKTCMAPLPCSVYLIEHPSLKYATTRSIAKYPVGIEVGPQPHGVLRADILDQMRRMLKHALDFIQRFNEGKEFPPCAIDVYKIMEKVDYPRNESGDVAAVIHPNLQDQDWKPLHPGDPVFVSLDGKVIPLGGDCTVYPVFVNEAAYYEKKEAFAKTTKLTLNAKSIRSTLH.

Positions 20 and 23 each coordinate Zn(2+). The N-acetyl-L-aspartate site is built by Arg-62, Asn-69, and Arg-70. His-115 is a Zn(2+) binding site. The N-acetyl-L-aspartate site is built by Tyr-163 and Arg-167. The active-site Proton donor/acceptor is the Glu-177. Tyr-287 lines the N-acetyl-L-aspartate pocket.

This sequence belongs to the AspA/AstE family. Aspartoacylase subfamily. In terms of assembly, homodimer. Zn(2+) serves as cofactor. As to expression, detected in kidney proximal tubule cells (at protein level).

The protein localises to the cytoplasm. Its subcellular location is the nucleus. It carries out the reaction an N-acyl-L-aspartate + H2O = a carboxylate + L-aspartate. The enzyme catalyses N-acetyl-L-aspartate + H2O = L-aspartate + acetate. Its function is as follows. Catalyzes the deacetylation of N-acetylaspartic acid (NAA) to produce acetate and L-aspartate. NAA occurs in high concentration in brain and its hydrolysis NAA plays a significant part in the maintenance of intact white matter. In other tissues it acts as a scavenger of NAA from body fluids. This chain is Aspartoacylase, found in Rattus norvegicus (Rat).